The primary structure comprises 96 residues: uncharacterized protein (96 aa).

The next 3 membrane-spanning stretches (helical) occupy residues 14–34, 38–58, and 67–87; these read FIEG…KYWA, LAVT…LLVL, and WPLK…GNFL.

It is found in the cell membrane. This is an uncharacterized protein from Bacillus subtilis (strain 168).